The sequence spans 1356 residues: Tenascin-R (1356 aa).

The N-terminal stretch at 1-31 (MGIEGETVVLKNMLIGVNLILLGSMLKPSEC) is a signal peptide. N-linked (GlcNAc...) asparagine glycosylation occurs at N55. Residues 127 to 157 (CASSAQVLQELLSRIEMLEREVSVLRDQCNT) adopt a coiled-coil conformation. O-linked (Xyl...) (chondroitin sulfate) serine glycosylation occurs at S176. N-linked (GlcNAc...) asparagine glycosylation is found at N180 and N198. EGF-like domains are found at residues 188 to 199 (CICNEGWFGKNC), 204 to 230 (CPLG…GDDC), and 235 to 261 (CPTD…GEDC). S271 carries O-linked (Xyl...) (chondroitin sulfate) serine glycosylation. A glycan (N-linked (GlcNAc...) asparagine) is linked at N278. 2 EGF-like domains span residues 281–292 (CLCQEGYAGEDC) and 293–324 (SQRR…PDCS). 2 disulfides stabilise this stretch: C297–C307 and C314–C323. The O-linked (Xyl...) (chondroitin sulfate) serine glycan is linked to S302. Fibronectin type-III domains lie at 328–419 (PPED…TPQG), 420–504 (LQFK…TVID), 505–596 (GPTQ…IDAP), 597–686 (KNLR…TELD), 687–776 (SPRD…FRPI), 777–864 (SHLH…TGID), 865–953 (PPKN…AMDS), 954–1040 (PMDL…TLLD), and 1041–1129 (PPAN…GGRV). N-linked (GlcNAc...) asparagine glycans are attached at residues N391, N469, and N580. At S723 the chain carries Phosphoserine. N790, N868, N873, N1034, N1044, and N1259 each carry an N-linked (GlcNAc...) asparagine glycan. The region spanning 1127–1342 (GRVFSHPQDC…FVEMKMRPYI (216 aa)) is the Fibrinogen C-terminal domain.

This sequence belongs to the tenascin family. As to quaternary structure, forms oligomers. Interacts with TNC and FN1. Interacts with BCAN and ACAN in a calcium -dependent manner. Interacts with CNTN1, SCN2B, PTPRZ1, and CSPG3. In terms of processing, contains N-linked oligosaccharides, O-linked sialylated structures. Contains O-linked chondroitin sulfate glycosaminoglycans. Contains N-linked oligosaccharides with a sulfated carbohydrate structure type GalNAc-4-SO4 or HNK-1 (SO4-3-GlcUABeta1,3GalBeta1,4GlcNAc). The levels of HNK-1 rise and fall in parallel to those of TNR during postnatal development of the cerebellum. In contrast, levels of GalNAc-4-SO4 are regulated independently from those of TNR, rising late in cerebellar development and continuing into adulthood. Early in postnatal development, GalNAc-4-SO4 is found predominantly on isoform 1, whereas in the adult it is predominantly on isoform 2. In terms of tissue distribution, brain-specific. Expressed in oligodendrocytes and small subsets of neurons (mainly interneurons and motoneurons) of the cerebellum, hippocampus and olfactory bulb. Expressed in dorsal root ganglia.

Its subcellular location is the secreted. It localises to the extracellular space. The protein resides in the extracellular matrix. In terms of biological role, neural extracellular matrix (ECM) protein involved in interactions with different cells and matrix components. Theses interactions can influence cellular behavior by either evoking a stable adhesion and differentiation, or repulsion and inhibition of neurite growth. Binding to cell surface gangliosides inhibits RGD-dependent integrin-mediated cell adhesion and results in an inhibition of PTK2/FAK1 (FAK) phosphorylation and cell detachment. Binding to membrane surface sulfatides results in a oligodendrocyte adhesion and differentiation. Interaction with CNTN1 induces a repulsion of neurons and an inhibition of neurite outgrowth. Interacts with SCN2B may play a crucial role in clustering and regulation of activity of sodium channels at nodes of Ranvier. TNR-linked chondroitin sulfate glycosaminoglycans are involved in the interaction with FN1 and mediates inhibition of cell adhesion and neurite outgrowth. The highly regulated addition of sulfated carbohydrate structure may modulate the adhesive properties of TNR over the course of development and during synapse maintenance. In Rattus norvegicus (Rat), this protein is Tenascin-R (Tnr).